Reading from the N-terminus, the 195-residue chain is Inner membrane-spanning protein YciB (195 aa).

Helical transmembrane passes span I34–L54, F65–F85, W88–G108, L131–F151, and F160–L180.

It belongs to the YciB family.

Its subcellular location is the cell inner membrane. Plays a role in cell envelope biogenesis, maintenance of cell envelope integrity and membrane homeostasis. The protein is Inner membrane-spanning protein YciB of Pseudomonas paraeruginosa (strain DSM 24068 / PA7) (Pseudomonas aeruginosa (strain PA7)).